Reading from the N-terminus, the 171-residue chain is Shikimate kinase (171 aa).

14-19 (GAGKST) provides a ligand contact to ATP. S18 is a binding site for Mg(2+). Substrate is bound by residues D36, R60, and G82. Residue R120 coordinates ATP. Residue R139 coordinates substrate. An ATP-binding site is contributed by Q156.

The protein belongs to the shikimate kinase family. As to quaternary structure, monomer. Mg(2+) serves as cofactor.

The protein resides in the cytoplasm. The catalysed reaction is shikimate + ATP = 3-phosphoshikimate + ADP + H(+). The protein operates within metabolic intermediate biosynthesis; chorismate biosynthesis; chorismate from D-erythrose 4-phosphate and phosphoenolpyruvate: step 5/7. Its function is as follows. Catalyzes the specific phosphorylation of the 3-hydroxyl group of shikimic acid using ATP as a cosubstrate. The sequence is that of Shikimate kinase from Shewanella sp. (strain MR-4).